Here is a 230-residue protein sequence, read N- to C-terminus: Transmembrane ascorbate ferrireductase 2 (230 aa).

2 helical membrane-spanning segments follow: residues 5-25 (VLGG…IAAL) and 50-70 (VHPV…MLAY). The region spanning 14–218 (VVRVLGFIIA…LGGFVILGVV (205 aa)) is the Cytochrome b561 domain. H51 provides a ligand contact to heme b. L-ascorbate is bound by residues K77 and K81. A helical transmembrane segment spans residues 82-102 (LVHLTLQLTAFILSLIGVWAA). H84 provides a ligand contact to heme b. F105, H106, and Y115 together coordinate monodehydro-L-ascorbate radical. Heme b is bound at residue H118. A helical membrane pass occupies residues 120–140 (WLGLACLFLFAFQWAAGFVTY). Residues Y140, R150, and A151 each coordinate L-ascorbate. A heme b-binding site is contributed by H157. The helical transmembrane segment at 157–177 (HVFLGISIYALALVTATTGIL) threads the bilayer. Monodehydro-L-ascorbate radical contacts are provided by F182 and N186. A helical transmembrane segment spans residues 198–218 (LVNTMGVLILILGGFVILGVV).

Homodimer. Heme b is required as a cofactor. In terms of tissue distribution, expressed in roots, seedlings, leaves and flowers. Expressed in the L1 layer of the shoot apex, in the epidermis of leaf primordia and young leaves and in vascular bundles. In the differentiation zone of the root, detected in the pericycle and in the epidermis, but not in the cortex. Strongly expressed in the cortical region of the root tip, in the meristematic tissue and in the epidermal cell layer of lateral roots, but not in the root caps. Highly expressed in unfertilized ovules. In mature embryos, expressed in the epidermis, cotyledon tips and root tips.

Its subcellular location is the membrane. It catalyses the reaction Fe(3+)(out) + L-ascorbate(in) = monodehydro-L-ascorbate radical(in) + Fe(2+)(out) + H(+). Its function is as follows. Two-heme-containing cytochrome. Catalyzes ascorbate-dependent transmembrane ferric-chelate reduction. The polypeptide is Transmembrane ascorbate ferrireductase 2 (CYB561B) (Arabidopsis thaliana (Mouse-ear cress)).